Reading from the N-terminus, the 89-residue chain is Small ribosomal subunit protein uS15 (89 aa).

The interval 1-23 is disordered; sequence MTLNTQEKQKLINTHQNHGTDTG.

It belongs to the universal ribosomal protein uS15 family. In terms of assembly, part of the 30S ribosomal subunit. Forms a bridge to the 50S subunit in the 70S ribosome, contacting the 23S rRNA.

Its function is as follows. One of the primary rRNA binding proteins, it binds directly to 16S rRNA where it helps nucleate assembly of the platform of the 30S subunit by binding and bridging several RNA helices of the 16S rRNA. Forms an intersubunit bridge (bridge B4) with the 23S rRNA of the 50S subunit in the ribosome. The chain is Small ribosomal subunit protein uS15 from Prochlorococcus marinus (strain MIT 9211).